The sequence spans 209 residues: uncharacterized protein (209 aa).

4 helical membrane passes run 21 to 41, 81 to 101, 107 to 127, and 159 to 179; these read LAYL…VFGL, ILGL…RIAA, VLVN…LYVF, and AAGA…LLFF.

Its subcellular location is the cell membrane. This is an uncharacterized protein from Bacillus subtilis (strain 168).